Reading from the N-terminus, the 679-residue chain is Stress-70 protein, mitochondrial (679 aa).

A mitochondrion-targeting transit peptide spans 1–46 (MISASRAAAARLVGTAASRSPAAARPQDGWNGLSHEAFRFVSRRDY). The tract at residues 1–432 (MISASRAAAA…IQGGVLAGDV (432 aa)) is interaction with NFS1. ADP is bound by residues Thr-63 and Asn-64. Residues 63-431 (TNSCVAVMEG…AIQGGVLAGD (369 aa)) form a nucleotide-binding domain (NBD) region. An N6-acetyllysine modification is found at Lys-76. Residue Thr-87 is modified to Phosphothreonine. N6-acetyllysine; alternate is present on residues Lys-135 and Lys-138. Lys-135 and Lys-138 each carry N6-succinyllysine; alternate. At Lys-143 the chain carries N6-acetyllysine. Lys-206 carries the post-translational modification N6-acetyllysine; alternate. Lys-206 carries the post-translational modification N6-succinyllysine; alternate. Lys-206 carries the post-translational modification N6-malonyllysine; alternate. An N6-acetyllysine mark is found at Lys-234 and Lys-288. Position 300 is an N6-acetyllysine; alternate (Lys-300). An N6-succinyllysine; alternate modification is found at Lys-300. ADP-binding residues include Glu-313, Lys-316, and Ser-320. Lys-360 is subject to N6-acetyllysine; alternate. Position 360 is an N6-succinyllysine; alternate (Lys-360). Lys-368 carries the post-translational modification N6-succinyllysine. Residues Gly-388 and Arg-391 each coordinate ADP. Lys-394 carries the post-translational modification N6-succinyllysine. Residue Ser-408 is modified to Phosphoserine. Residues 432 to 441 (VTDVLLLDVT) are interdomain linker. Residues 432 to 679 (VTDVLLLDVT…QKEDQKEEKQ (248 aa)) are interaction with FXN and ISCU. The tract at residues 442-679 (PLSLGIETLG…QKEDQKEEKQ (238 aa)) is substrate-binding domain (SBD). Arg-513 carries the post-translational modification Omega-N-methylarginine. N6-acetyllysine; alternate occurs at positions 567 and 600. N6-succinyllysine; alternate is present on residues Lys-567 and Lys-600. Lys-610 carries the N6-succinyllysine modification. Lys-612 is modified (N6-acetyllysine). Lys-646 is subject to N6-acetyllysine; alternate. Lys-646 is modified (N6-succinyllysine; alternate). The disordered stretch occupies residues 656–679 (ASEREGSGSSGTGEQKEDQKEEKQ). Residues 669–679 (EQKEDQKEEKQ) are compositionally biased toward basic and acidic residues.

It belongs to the heat shock protein 70 family. As to quaternary structure, interacts strongly with the intermediate form of FXN and weakly with its mature form. Interacts with HSCB. Associates with the mitochondrial contact site and cristae organizing system (MICOS) complex, composed of at least MICOS10/MIC10, CHCHD3/MIC19, CHCHD6/MIC25, APOOL/MIC27, IMMT/MIC60, APOO/MIC23/MIC26 and QIL1/MIC13. This complex was also known under the names MINOS or MitOS complex. The MICOS complex associates with mitochondrial outer membrane proteins SAMM50, MTX1, MTX2 and DNAJC11, mitochondrial inner membrane protein TMEM11 and with HSPA9. Interacts with DNLZ, the interaction is required to prevent self-aggregation. Interacts with TESPA1. Interacts with PDPN. Interacts with NFU1, NFS1 and ISCU. Interacts with TP53; the interaction promotes TP53 degradation. Interacts (via SBD domain) with UBXN2A; the interaction with UBXN2A inhibits HSPA9/MOT-2 interaction with and degradation of TP53, thereby promotes TP53 translocation to the nucleus. Interacts with ITPR1 AND VDAC1; this interaction couples ITPR1 to VDAC1. Component of the TIM23 mitochondrial inner membrane pre-sequence translocase complex.

Its subcellular location is the mitochondrion. It localises to the nucleus. The protein resides in the nucleolus. The protein localises to the cytoplasm. It is found in the mitochondrion matrix. The catalysed reaction is ATP + H2O = ADP + phosphate + H(+). With respect to regulation, the chaperone activity is regulated by ATP-induced allosteric coupling of the nucleotide-binding (NBD) and substrate-binding (SBD) domains. ATP binding in the NBD leads to a conformational change in the NBD, which is transferred through the interdomain linker (IDL) to the substrate-binding domain (SBD). This elicits a reduced substrate affinity and a faster substrate exchange rate. Upon hydrolysis of ATP to ADP, the protein undergoes a conformational change that increases its affinity for substrate proteins. It cycles through repeated phases of ATP hydrolysis and nucleotide exchange, facilitating repeated cycles of substrate binding and release. Functions in collaboration with co-chaperones. Functions with the co-chaperone, DNLZ, to maintain solubility and regulate ATP hydrolysis. Nucleotide exchange factors, GRPEL1 and GRPEL2, accelerate nucleotide exchange. Its function is as follows. Mitochondrial chaperone that plays a key role in mitochondrial protein import, folding, and assembly. Plays an essential role in the protein quality control system, the correct folding of proteins, the re-folding of misfolded proteins, and the targeting of proteins for subsequent degradation. These processes are achieved through cycles of ATP binding, ATP hydrolysis, and ADP release, mediated by co-chaperones. In mitochondria, it associates with the TIM (translocase of the inner membrane) protein complex to assist in the import and folding of mitochondrial proteins. Plays an important role in mitochondrial iron-sulfur cluster (ISC) biogenesis. Interacts with and stabilizes ISC cluster assembly proteins FXN, NFU1, NFS1 and ISCU. Regulates erythropoiesis via stabilization of ISC assembly. Regulates mitochondrial calcium-dependent apoptosis by coupling two calcium channels, ITPR1 and VDAC1, at the mitochondria-associated endoplasmic reticulum (ER) membrane to facilitate calcium transport from the ER lumen to the mitochondria intermembrane space, providing calcium for the downstream calcium channel MCU, which releases it into the mitochondrial matrix. Although primarily located in the mitochondria, it is also found in other cellular compartments. In the cytosol, it associates with proteins involved in signaling, apoptosis, or senescence. It may play a role in cell cycle regulation via its interaction with and promotion of degradation of TP53. May play a role in the control of cell proliferation and cellular aging. Protects against reactive oxygen species (ROS). Extracellular HSPA9 plays a cytoprotective role by preventing cell lysis following immune attack by the membrane attack complex by disrupting formation of the complex. The polypeptide is Stress-70 protein, mitochondrial (Mus musculus (Mouse)).